Reading from the N-terminus, the 241-residue chain is Orotidine 5'-phosphate decarboxylase (241 aa).

Substrate is bound by residues Asp-19, Lys-41, 69–78, Thr-124, Arg-185, Gln-194, Gly-214, and Arg-215; that span reads DLKFFDIPAT. Lys-71 acts as the Proton donor in catalysis.

The protein belongs to the OMP decarboxylase family. Type 1 subfamily. Homodimer.

It catalyses the reaction orotidine 5'-phosphate + H(+) = UMP + CO2. Its pathway is pyrimidine metabolism; UMP biosynthesis via de novo pathway; UMP from orotate: step 2/2. Its function is as follows. Catalyzes the decarboxylation of orotidine 5'-monophosphate (OMP) to uridine 5'-monophosphate (UMP). The protein is Orotidine 5'-phosphate decarboxylase of Stenotrophomonas maltophilia (strain K279a).